Reading from the N-terminus, the 155-residue chain is Ribosome maturation factor RimP (155 aa).

It belongs to the RimP family.

It localises to the cytoplasm. Functionally, required for maturation of 30S ribosomal subunits. The protein is Ribosome maturation factor RimP of Listeria innocua serovar 6a (strain ATCC BAA-680 / CLIP 11262).